The chain runs to 21 residues: Fibrinogen beta chain (21 aa).

A Pyrrolidone carboxylic acid modification is found at glutamine 1. Positions 1 to 11 (QHSTDYDEEEE) are enriched in acidic residues. The segment at 1-21 (QHSTDYDEEEEDRAKLHLDAR) is disordered. O-linked (GalNAc...) threonine glycosylation occurs at threonine 4. At tyrosine 6 the chain carries Sulfotyrosine. Basic and acidic residues predominate over residues 12-21 (DRAKLHLDAR).

As to quaternary structure, heterohexamer; disulfide linked. Contains 2 sets of 3 non-identical chains (alpha, beta and gamma). The 2 heterotrimers are in head to head conformation with the N-termini in a small central domain. Post-translationally, conversion of fibrinogen to fibrin is triggered by thrombin, which cleaves fibrinopeptides A and B from alpha and beta chains, and thus exposes the N-terminal polymerization sites responsible for the formation of the soft clot.

Its subcellular location is the secreted. Its function is as follows. Cleaved by the protease thrombin to yield monomers which, together with fibrinogen alpha (FGA) and fibrinogen gamma (FGG), polymerize to form an insoluble fibrin matrix. Fibrin has a major function in hemostasis as one of the primary components of blood clots. In addition, functions during the early stages of wound repair to stabilize the lesion and guide cell migration during re-epithelialization. Was originally thought to be essential for platelet aggregation, based on in vitro studies using anticoagulated blood. However subsequent studies have shown that it is not absolutely required for thrombus formation in vivo. Enhances expression of SELP in activated platelets. Maternal fibrinogen is essential for successful pregnancy. Fibrin deposition is also associated with infection, where it protects against IFNG-mediated hemorrhage. May also facilitate the antibacterial immune response via both innate and T-cell mediated pathways. The chain is Fibrinogen beta chain (FGB) from Cervus elaphus (Red deer).